Consider the following 523-residue polypeptide: 2-isopropylmalate synthase (523 aa).

The Pyruvate carboxyltransferase domain maps to 5–267; it reads VIIFDTTLRD…HTNINHHEIW (263 aa). Mn(2+)-binding residues include Asp14, His202, His204, and Asn238. The interval 392–523 is regulatory domain; that stretch reads RLDYFSVQSG…QNKENNKETV (132 aa).

The protein belongs to the alpha-IPM synthase/homocitrate synthase family. LeuA type 1 subfamily. In terms of assembly, homodimer. It depends on Mn(2+) as a cofactor.

Its subcellular location is the cytoplasm. It catalyses the reaction 3-methyl-2-oxobutanoate + acetyl-CoA + H2O = (2S)-2-isopropylmalate + CoA + H(+). It functions in the pathway amino-acid biosynthesis; L-leucine biosynthesis; L-leucine from 3-methyl-2-oxobutanoate: step 1/4. Catalyzes the condensation of the acetyl group of acetyl-CoA with 3-methyl-2-oxobutanoate (2-ketoisovalerate) to form 3-carboxy-3-hydroxy-4-methylpentanoate (2-isopropylmalate). This chain is 2-isopropylmalate synthase, found in Salmonella typhi.